The primary structure comprises 503 residues: Lanosterol 14-alpha demethylase (503 aa).

Residues 24–44 (GNLLSTLLIACAFTLSLVYLF) form a helical membrane-spanning segment. Cysteine 449 lines the heme pocket.

This sequence belongs to the cytochrome P450 family. Heme is required as a cofactor. In terms of processing, ubiquitinated by MARCHF6, leading to proteasomal degradation.

The protein localises to the endoplasmic reticulum membrane. The protein resides in the microsome membrane. The catalysed reaction is a 14alpha-methyl steroid + 3 reduced [NADPH--hemoprotein reductase] + 3 O2 = a Delta(14) steroid + formate + 3 oxidized [NADPH--hemoprotein reductase] + 4 H2O + 4 H(+). It carries out the reaction lanosterol + 3 reduced [NADPH--hemoprotein reductase] + 3 O2 = 4,4-dimethyl-5alpha-cholesta-8,14,24-trien-3beta-ol + formate + 3 oxidized [NADPH--hemoprotein reductase] + 4 H2O + 4 H(+). The enzyme catalyses 24,25-dihydrolanosterol + 3 reduced [NADPH--hemoprotein reductase] + 3 O2 = 4,4-dimethyl-8,14-cholestadien-3beta-ol + formate + 3 oxidized [NADPH--hemoprotein reductase] + 4 H2O + 4 H(+). It catalyses the reaction a 14alpha-methyl steroid + reduced [NADPH--hemoprotein reductase] + O2 = a 14alpha-hydroxymethyl steroid + oxidized [NADPH--hemoprotein reductase] + H2O + H(+). The catalysed reaction is a 14alpha-hydroxymethyl steroid + reduced [NADPH--hemoprotein reductase] + O2 = a 14alpha-formyl steroid + oxidized [NADPH--hemoprotein reductase] + 2 H2O + H(+). It carries out the reaction a 14alpha-formyl steroid + reduced [NADPH--hemoprotein reductase] + O2 = a Delta(14) steroid + formate + oxidized [NADPH--hemoprotein reductase] + H2O + 2 H(+). The enzyme catalyses lanosterol + reduced [NADPH--hemoprotein reductase] + O2 = 32-hydroxylanosterol + oxidized [NADPH--hemoprotein reductase] + H2O + H(+). It catalyses the reaction 32-hydroxylanosterol + reduced [NADPH--hemoprotein reductase] + O2 = 32-oxolanosterol + oxidized [NADPH--hemoprotein reductase] + 2 H2O + H(+). The catalysed reaction is 32-oxolanosterol + reduced [NADPH--hemoprotein reductase] + O2 = 4,4-dimethyl-5alpha-cholesta-8,14,24-trien-3beta-ol + formate + oxidized [NADPH--hemoprotein reductase] + H2O + 2 H(+). It carries out the reaction 24,25-dihydrolanosterol + reduced [NADPH--hemoprotein reductase] + O2 = 32-hydroxy-24,25-dihydrolanosterol + oxidized [NADPH--hemoprotein reductase] + H2O + H(+). The enzyme catalyses 32-hydroxy-24,25-dihydrolanosterol + reduced [NADPH--hemoprotein reductase] + O2 = 32-oxo-24,25-dihydrolanosterol + oxidized [NADPH--hemoprotein reductase] + 2 H2O + H(+). It catalyses the reaction 32-oxo-24,25-dihydrolanosterol + reduced [NADPH--hemoprotein reductase] + O2 = 4,4-dimethyl-8,14-cholestadien-3beta-ol + formate + oxidized [NADPH--hemoprotein reductase] + H2O + 2 H(+). The protein operates within steroid biosynthesis; zymosterol biosynthesis; zymosterol from lanosterol: step 1/6. Inhibited by azalanstat. Inhibited by azole antifungal agents ketoconazole, itraconazole and fluconazole. In terms of biological role, sterol 14alpha-demethylase that plays a critical role in the cholesterol biosynthesis pathway, being cholesterol the major sterol component in mammalian membranes as well as a precursor for bile acid and steroid hormone synthesis. Cytochrome P450 monooxygenase that catalyzes the three-step oxidative removal of the 14alpha-methyl group (C-32) of sterols such as lanosterol (lanosta-8,24-dien-3beta-ol) and 24,25-dihydrolanosterol (DHL) in the form of formate, and converts the sterols to 4,4-dimethyl-5alpha-cholesta-8,14,24-trien-3beta-ol and 4,4-dimethyl-8,14-cholestadien-3beta-ol, respectively, which are intermediates of cholesterol biosynthesis. Can also demethylate substrates not intrinsic to mammals, such as eburicol (24-methylene-24,25-dihydrolanosterol), but at a lower rate than DHL. The polypeptide is Lanosterol 14-alpha demethylase (Rattus norvegicus (Rat)).